The primary structure comprises 226 residues: MRRKSGCSAGLDDRSAYEEVVLDSMLYSARLKETVARGNSAVVVAMARLIAGVFETGGKLLICGNGGSAADAQHLATEFTIRYRSSVHRPALPAIALTTDSSALTAGANDLGYDEVFRRLVEAYGRPGDLLLGLSTSGNSRSVVHALDYARKHGMRTLALLGGDGGALKGLADLSVVVPHNGSADRVQECHITLGHVIIDLVERMMGYGTECNNQQNEQGYADQTD.

Positions 50–212 constitute an SIS domain; it reads IAGVFETGGK…ERMMGYGTEC (163 aa). Substrate is bound at residue 65–67; sequence NGG. Zn(2+) is bound by residues H74 and E78. Residues E78, 109–110, 135–137, S140, and Q188 each bind substrate; these read ND and STS. 2 residues coordinate Zn(2+): Q188 and H196.

It belongs to the SIS family. GmhA subfamily. Requires Zn(2+) as cofactor.

It localises to the cytoplasm. The enzyme catalyses 2 D-sedoheptulose 7-phosphate = D-glycero-alpha-D-manno-heptose 7-phosphate + D-glycero-beta-D-manno-heptose 7-phosphate. It participates in carbohydrate biosynthesis; D-glycero-D-manno-heptose 7-phosphate biosynthesis; D-glycero-alpha-D-manno-heptose 7-phosphate and D-glycero-beta-D-manno-heptose 7-phosphate from sedoheptulose 7-phosphate: step 1/1. Functionally, catalyzes the isomerization of sedoheptulose 7-phosphate in D-glycero-D-manno-heptose 7-phosphate. This chain is Phosphoheptose isomerase, found in Chlorobium phaeobacteroides (strain DSM 266 / SMG 266 / 2430).